The chain runs to 291 residues: Halorhodopsin (291 aa).

Residues 1-30 (MTETLPPVTESAVALQAEVTQRELFEFVLN) lie on the Extracellular side of the membrane. The helical transmembrane segment at 31-56 (DPLLASSLYINIALAGLSILLFVFMT) threads the bilayer. The Cytoplasmic portion of the chain corresponds to 57–62 (RGLDDP). A helical transmembrane segment spans residues 63–86 (RAKLIAVSTILVPVVSIASYTGLA). Topologically, residues 87–120 (SGLTISVLEMPAGHFAEGSSVMLGGEEVDGVVTM) are extracellular. A helical membrane pass occupies residues 121–142 (WGRYLTWALSTPMILLALGLLA). The Cytoplasmic portion of the chain corresponds to 143–145 (GSN). Residues 146–169 (ATKLFTAITFDIAMCVTGLAAALT) traverse the membrane as a helical segment. Residues 170–172 (TSS) are Extracellular-facing. The chain crosses the membrane as a helical span at residues 173–195 (HLMRWFWYAISCACFLVVLYILL). Topologically, residues 196 to 207 (VEWAQDAKAAGT) are cytoplasmic. A helical membrane pass occupies residues 208–231 (ADMFNTLKLLTVVMWLGYPIVWAL). Residues 232–240 (GVEGIAVLP) lie on the Extracellular side of the membrane. The helical transmembrane segment at 241 to 269 (VGVTSWGYSFLDIVAKYIFAFLLLNYLTS) threads the bilayer. Lys256 carries the N6-(retinylidene)lysine modification. Residues 270-291 (NESVVSGSILDVPSASGTPADD) are Cytoplasmic-facing.

This sequence belongs to the archaeal/bacterial/fungal opsin family.

It localises to the cell membrane. Functionally, light-driven anion pump. Binding affinity for the anions is in the order, bromide &gt; chloride &gt; nitrate &gt; azide &gt; bromate and binding is pH dependent. In Natronomonas pharaonis (Natronobacterium pharaonis), this protein is Halorhodopsin (hop).